Reading from the N-terminus, the 325-residue chain is 4-diphosphocytidyl-2-C-methyl-D-erythritol kinase (325 aa).

Residue Lys-22 is part of the active site. 110–120 (PVAGGMAGGSA) contacts ATP. Asp-152 is an active-site residue. The segment at 306-325 (PAPGARVLEAVSTPSPGGRS) is disordered.

The protein belongs to the GHMP kinase family. IspE subfamily.

The enzyme catalyses 4-CDP-2-C-methyl-D-erythritol + ATP = 4-CDP-2-C-methyl-D-erythritol 2-phosphate + ADP + H(+). It functions in the pathway isoprenoid biosynthesis; isopentenyl diphosphate biosynthesis via DXP pathway; isopentenyl diphosphate from 1-deoxy-D-xylulose 5-phosphate: step 3/6. Catalyzes the phosphorylation of the position 2 hydroxy group of 4-diphosphocytidyl-2C-methyl-D-erythritol. The polypeptide is 4-diphosphocytidyl-2-C-methyl-D-erythritol kinase (Kineococcus radiotolerans (strain ATCC BAA-149 / DSM 14245 / SRS30216)).